The chain runs to 58 residues: Large ribosomal subunit protein bL32 (58 aa).

Belongs to the bacterial ribosomal protein bL32 family.

This Anaplasma phagocytophilum (strain HZ) protein is Large ribosomal subunit protein bL32.